A 196-amino-acid polypeptide reads, in one-letter code: UPF0316 protein LBL_2483 (196 aa).

A run of 3 helical transmembrane segments spans residues 12-32, 44-64, and 70-90; these read YCVL…IGTI, IAAS…TQVI, and ALCY…GMIL.

It belongs to the UPF0316 family.

Its subcellular location is the cell membrane. This Leptospira borgpetersenii serovar Hardjo-bovis (strain L550) protein is UPF0316 protein LBL_2483.